The following is a 496-amino-acid chain: Glutamate--tRNA ligase (496 aa).

The 'HIGH' region motif lies at 12–22; the sequence is PSPTGTPHVGL. Residues 256–260 carry the 'KMSKS' region motif; it reads KLSKR. Residue K259 coordinates ATP.

The protein belongs to the class-I aminoacyl-tRNA synthetase family. Glutamate--tRNA ligase type 1 subfamily. In terms of assembly, monomer.

The protein resides in the cytoplasm. It catalyses the reaction tRNA(Glu) + L-glutamate + ATP = L-glutamyl-tRNA(Glu) + AMP + diphosphate. Functionally, catalyzes the attachment of glutamate to tRNA(Glu) in a two-step reaction: glutamate is first activated by ATP to form Glu-AMP and then transferred to the acceptor end of tRNA(Glu). In Mycobacteroides abscessus (strain ATCC 19977 / DSM 44196 / CCUG 20993 / CIP 104536 / JCM 13569 / NCTC 13031 / TMC 1543 / L948) (Mycobacterium abscessus), this protein is Glutamate--tRNA ligase.